A 234-amino-acid chain; its full sequence is Sugar fermentation stimulation protein homolog (234 aa).

The protein belongs to the SfsA family.

The sequence is that of Sugar fermentation stimulation protein homolog from Photobacterium profundum (strain SS9).